The primary structure comprises 262 residues: Global transcriptional regulator CodY (262 aa).

A GAF domain region spans residues 1-159 (MATLLEKTRK…ATTVIGVQLS (159 aa)). The H-T-H motif DNA-binding region spans 207–226 (ASVIADKIGITRSVIVNALR).

The protein belongs to the CodY family.

Its subcellular location is the cytoplasm. In terms of biological role, DNA-binding global transcriptional regulator which is involved in the adaptive response to starvation and acts by directly or indirectly controlling the expression of numerous genes in response to nutrient availability. During rapid exponential growth, CodY is highly active and represses genes whose products allow adaptation to nutrient depletion. This is Global transcriptional regulator CodY from Lactococcus lactis subsp. lactis (strain IL1403) (Streptococcus lactis).